A 122-amino-acid polypeptide reads, in one-letter code: MTTLLGPITRRFLSATQIARSLTRAEVPGEQLDAKRARLLYQSKKRGILENDILLGNFAEENLKKMSEPELKAYDKLINGEHMEWDLFYYLSNKKTPPEDVEKCSVYQKVKKFVDEKRVPRS.

It belongs to the SDHAF2 family. As to quaternary structure, interacts with the flavoprotein subunit within the SDH catalytic dimer.

It is found in the mitochondrion matrix. Its function is as follows. Plays an essential role in the assembly of succinate dehydrogenase (SDH), an enzyme complex (also referred to as respiratory complex II) that is a component of both the tricarboxylic acid (TCA) cycle and the mitochondrial electron transport chain, and which couples the oxidation of succinate to fumarate with the reduction of ubiquinone (coenzyme Q) to ubiquinol. Required for flavinylation (covalent attachment of FAD) of the flavoprotein subunit of the SDH catalytic dimer. This is Succinate dehydrogenase assembly factor 2, mitochondrial from Caenorhabditis briggsae.